The primary structure comprises 1366 residues: Collagen alpha-2(I) chain (1366 aa).

An N-terminal signal peptide occupies residues 1–22; that stretch reads MLSFVDTRTLLLLAVTLCLATC. Position 23 is a pyrrolidone carboxylic acid (Q23). The propeptide at 23–79 is N-terminal propeptide; the sequence is QSLQEETVRKGPAGDRGPRGERGPPGPPGRDGEDGPTGPPGPPGPPGPPGLGGNFAA. Positions 28-44 are enriched in basic and acidic residues; sequence ETVRKGPAGDRGPRGER. A disordered region spans residues 28 to 1130; the sequence is ETVRKGPAGD…QPRSAPSLRP (1103 aa). P47, P50, P62, P65, P68, and P71 each carry 4-hydroxyproline. A compositionally biased stretch (pro residues) spans 59–71; sequence TGPPGPPGPPGPP. A Pyrrolidone carboxylic acid modification is found at Q80. The residue at position 84 (K84) is an Allysine. A compositionally biased stretch (gly residues) spans 84–94; that stretch reads KGVGLGPGPMG. Residues 95–140 are compositionally biased toward low complexity; that stretch reads LMGPRGPPGAAGAPGPQGFQGPAGEPGEPGQTGPAGARGPAGPPGK. 4-hydroxyproline occurs at positions 102 and 108. Positions 141–155 are enriched in basic and acidic residues; the sequence is AGEDGHPGKPGRPGE. K177 carries the 5-hydroxylysine; alternate modification. O-linked (Gal...) hydroxylysine; alternate glycosylation occurs at K177. Composition is skewed to low complexity over residues 225 to 254, 269 to 293, 300 to 321, 330 to 345, 398 to 410, and 419 to 434; these read VGAP…SAGP, AVGN…LSGP, PGAN…AGAP, PGPV…RGLV, LRGS…LPGA, and PPGS…VRGP. A 4-hydroxyproline mark is found at P420, P441, and P444. Composition is skewed to low complexity over residues 470–489 and 513–531; these read LPGI…RGEP and AGLA…NGAQ. Gly residues predominate over residues 538–547; that stretch reads GVQGGKGEQG. 4 stretches are compositionally biased toward low complexity: residues 594 to 611, 623 to 648, 663 to 710, and 717 to 737; these read PGES…SRGP, EPGV…RGAA, RGEI…PRGS, and VGPA…QPGA. A compositionally biased stretch (basic and acidic residues) spans 738-747; sequence KGERGAKGPK. Residues 752-765 show a composition bias toward low complexity; the sequence is VVGPTGPVGAAGPA. Positions 775–784 are enriched in gly residues; it reads GSRGDGGPPG. Low complexity-rich tracts occupy residues 786 to 795, 849 to 876, 884 to 932, 956 to 974, and 983 to 1001; these read TGFPGAAGRT, SGEA…LGLP, LPGV…NPGN, PVGA…PAGK, and PSGP…PSGP. Positions 1005 to 1016 are enriched in basic and acidic residues; it reads RGDKGEPGEKGP. Residues 1089-1101 show a composition bias toward pro residues; that stretch reads AGPPGPPGPPGPP. Residues 1120–1366 constitute a propeptide, C-terminal propeptide; sequence DQPRSAPSLR…FVDIGPVCFK (247 aa). The Fibrillar collagen NC1 domain maps to 1133–1366; it reads YEVDATLKSL…FVDIGPVCFK (234 aa). Disulfide bonds link C1163–C1195, C1203–C1364, and C1272–C1317. Residues D1181, N1183, Q1184, C1186, and D1189 each coordinate Ca(2+). N1267 carries N-linked (GlcNAc...) asparagine glycosylation.

It belongs to the fibrillar collagen family. In terms of assembly, trimers of one alpha 2(I) and two alpha 1(I) chains. Interacts (via C-terminus) with TMEM131 (via PapD-L domain); the interaction is direct and is involved in assembly and TRAPPIII ER-to-Golgi transport complex-dependent secretion of collagen. In terms of processing, prolines at the third position of the tripeptide repeating unit (G-X-Y) are hydroxylated in some or all of the chains. As to expression, forms the fibrils of tendon, ligaments and bones. In bones the fibrils are mineralized with calcium hydroxyapatite.

The protein resides in the secreted. The protein localises to the extracellular space. It localises to the extracellular matrix. In terms of biological role, type I collagen is a member of group I collagen (fibrillar forming collagen). The sequence is that of Collagen alpha-2(I) chain (COL1A2) from Homo sapiens (Human).